We begin with the raw amino-acid sequence, 160 residues long: 2-C-methyl-D-erythritol 2,4-cyclodiphosphate synthase (160 aa).

A divalent metal cation is bound by residues Asp11 and His13. 4-CDP-2-C-methyl-D-erythritol 2-phosphate-binding positions include 11–13 and 37–38; these read DVH and HS. Residue His45 participates in a divalent metal cation binding. 4-CDP-2-C-methyl-D-erythritol 2-phosphate-binding positions include 59–61 and Arg145; that span reads DIG.

It belongs to the IspF family. In terms of assembly, homotrimer. A divalent metal cation serves as cofactor.

The enzyme catalyses 4-CDP-2-C-methyl-D-erythritol 2-phosphate = 2-C-methyl-D-erythritol 2,4-cyclic diphosphate + CMP. Its pathway is isoprenoid biosynthesis; isopentenyl diphosphate biosynthesis via DXP pathway; isopentenyl diphosphate from 1-deoxy-D-xylulose 5-phosphate: step 4/6. Functionally, involved in the biosynthesis of isopentenyl diphosphate (IPP) and dimethylallyl diphosphate (DMAPP), two major building blocks of isoprenoid compounds. Catalyzes the conversion of 4-diphosphocytidyl-2-C-methyl-D-erythritol 2-phosphate (CDP-ME2P) to 2-C-methyl-D-erythritol 2,4-cyclodiphosphate (ME-CPP) with a corresponding release of cytidine 5-monophosphate (CMP). The protein is 2-C-methyl-D-erythritol 2,4-cyclodiphosphate synthase of Neisseria meningitidis serogroup B (strain ATCC BAA-335 / MC58).